Consider the following 91-residue polypeptide: Probable Thioredoxin (91 aa).

The region spanning Met-1–Ser-91 is the Glutaredoxin domain. Cys-12 and Cys-15 are oxidised to a cystine.

This sequence belongs to the glutaredoxin family.

The protein resides in the cytoplasm. Acts to maintain redox homeostasis; functions as a protein disulfide reductase. This is Probable Thioredoxin from Archaeoglobus fulgidus (strain ATCC 49558 / DSM 4304 / JCM 9628 / NBRC 100126 / VC-16).